Here is a 222-residue protein sequence, read N- to C-terminus: WAP four-disulfide core domain protein 1 (222 aa).

An N-terminal signal peptide occupies residues 1–32 (MDSRMLSDQRFCRRIFAAALCVLVLLADSGCA). Residues 61–110 (HYQKNDRCPPPPQTLPDRACEVPSCRSDSECERHKRCCYNGCIYACLESV) enclose the WAP domain. Intrachain disulfides connect cysteine 68/cysteine 98, cysteine 80/cysteine 102, cysteine 85/cysteine 97, and cysteine 91/cysteine 106.

The protein localises to the secreted. Has growth inhibitory activity. This chain is WAP four-disulfide core domain protein 1 (WFDC1), found in Gallus gallus (Chicken).